Here is a 657-residue protein sequence, read N- to C-terminus: Conserved oligomeric Golgi complex subunit 6 (657 aa).

The protein belongs to the COG6 family. As to quaternary structure, component of the conserved oligomeric Golgi complex which is composed of eight different subunits and is required for normal Golgi morphology and localization.

Its subcellular location is the golgi apparatus membrane. Functionally, required for normal Golgi function. The polypeptide is Conserved oligomeric Golgi complex subunit 6 (COG6) (Homo sapiens (Human)).